Consider the following 361-residue polypeptide: MGSMAPRTLLLLLAGALTLKDTQAGSHSMRYFYTSVSRPGLGEPRFIIVGYVDDTQFVRFDSDAASPRMEQRAPWMGQVEPEYWDQQTQIAKDTAQTFRVNLNTALRYYNQSAAGSHTFQTMFGCEVWADGRFFHGYRQYAYDGADYIALNEDLRSWTAADTAAQNTQRKWEAAGEAERHRAYLERECVEWLRRYLEMGKETLQRADPPKAHVTHHPASDREATLRCWALGFYPAEISLTWQRDGEDQTQDTELVETRPGGDGTFQKWAAVVVPSGEEQRYTCRVQHEGLPEPLTLTWEPPAQPTALIVGIVAGVLGVLLILGAVVAVVRRKKHSSDGKGGRYTPAAGGHRDQGSDDSLMP.

A signal peptide spans methionine 1–alanine 24. The interval glycine 25–alanine 114 is alpha-1. The Extracellular segment spans residues glycine 25–isoleucine 308. Asparagine 110 is a glycosylation site (N-linked (GlcNAc...) asparagine). Residues glycine 115 to alanine 206 form an alpha-2 region. Disulfide bonds link cysteine 125-cysteine 188 and cysteine 227-cysteine 283. An alpha-3 region spans residues aspartate 207 to tryptophan 298. The Ig-like C1-type domain maps to proline 209–threonine 297. A connecting peptide region spans residues glutamate 299 to isoleucine 308. A helical transmembrane segment spans residues valine 309–valine 329. The Cytoplasmic portion of the chain corresponds to arginine 330–proline 361. Residues serine 335–proline 361 are disordered. 2 positions are modified to phosphoserine: serine 355 and serine 358.

This sequence belongs to the MHC class I family. In terms of assembly, heterodimer of an alpha chain and a beta chain (beta-2-microglobulin).

It is found in the membrane. Functionally, involved in the presentation of foreign antigens to the immune system. In Oryctolagus cuniculus (Rabbit), this protein is RLA class I histocompatibility antigen, alpha chain 11/11.